Here is a 399-residue protein sequence, read N- to C-terminus: Dual-specificity RNA methyltransferase RlmN (399 aa).

E120 (proton acceptor) is an active-site residue. The region spanning 126–367 (EEGRGTLCVS…SPVRTPRGRD (242 aa)) is the Radical SAM core domain. A disulfide bridge links C133 with C372. Residues C140, C144, and C147 each coordinate [4Fe-4S] cluster. S-adenosyl-L-methionine is bound by residues 198 to 199 (GE), S230, 252 to 254 (SLH), and N329. C372 acts as the S-methylcysteine intermediate in catalysis.

It belongs to the radical SAM superfamily. RlmN family. [4Fe-4S] cluster serves as cofactor.

It localises to the cytoplasm. It carries out the reaction adenosine(2503) in 23S rRNA + 2 reduced [2Fe-2S]-[ferredoxin] + 2 S-adenosyl-L-methionine = 2-methyladenosine(2503) in 23S rRNA + 5'-deoxyadenosine + L-methionine + 2 oxidized [2Fe-2S]-[ferredoxin] + S-adenosyl-L-homocysteine. The enzyme catalyses adenosine(37) in tRNA + 2 reduced [2Fe-2S]-[ferredoxin] + 2 S-adenosyl-L-methionine = 2-methyladenosine(37) in tRNA + 5'-deoxyadenosine + L-methionine + 2 oxidized [2Fe-2S]-[ferredoxin] + S-adenosyl-L-homocysteine. In terms of biological role, specifically methylates position 2 of adenine 2503 in 23S rRNA and position 2 of adenine 37 in tRNAs. m2A2503 modification seems to play a crucial role in the proofreading step occurring at the peptidyl transferase center and thus would serve to optimize ribosomal fidelity. This Parvibaculum lavamentivorans (strain DS-1 / DSM 13023 / NCIMB 13966) protein is Dual-specificity RNA methyltransferase RlmN.